Reading from the N-terminus, the 149-residue chain is D-aminoacyl-tRNA deacylase (149 aa).

A Gly-cisPro motif, important for rejection of L-amino acids motif is present at residues 137-138 (GP).

It belongs to the DTD family. As to quaternary structure, homodimer.

The protein localises to the cytoplasm. It carries out the reaction glycyl-tRNA(Ala) + H2O = tRNA(Ala) + glycine + H(+). It catalyses the reaction a D-aminoacyl-tRNA + H2O = a tRNA + a D-alpha-amino acid + H(+). In terms of biological role, an aminoacyl-tRNA editing enzyme that deacylates mischarged D-aminoacyl-tRNAs. Also deacylates mischarged glycyl-tRNA(Ala), protecting cells against glycine mischarging by AlaRS. Acts via tRNA-based rather than protein-based catalysis; rejects L-amino acids rather than detecting D-amino acids in the active site. By recycling D-aminoacyl-tRNA to D-amino acids and free tRNA molecules, this enzyme counteracts the toxicity associated with the formation of D-aminoacyl-tRNA entities in vivo and helps enforce protein L-homochirality. In Clostridium botulinum (strain Alaska E43 / Type E3), this protein is D-aminoacyl-tRNA deacylase.